We begin with the raw amino-acid sequence, 242 residues long: ATP synthase subunit b (242 aa).

A run of 2 helical transmembrane segments spans residues 8–28 and 87–107; these read VLPF…ASAP and LMDL…LIKF.

The protein belongs to the ATPase B chain family. F-type ATPases have 2 components, F(1) - the catalytic core - and F(0) - the membrane proton channel. F(1) has five subunits: alpha(3), beta(3), gamma(1), delta(1), epsilon(1). F(0) has three main subunits: a(1), b(2) and c(10-14). The alpha and beta chains form an alternating ring which encloses part of the gamma chain. F(1) is attached to F(0) by a central stalk formed by the gamma and epsilon chains, while a peripheral stalk is formed by the delta and b chains.

It localises to the cell inner membrane. In terms of biological role, f(1)F(0) ATP synthase produces ATP from ADP in the presence of a proton or sodium gradient. F-type ATPases consist of two structural domains, F(1) containing the extramembraneous catalytic core and F(0) containing the membrane proton channel, linked together by a central stalk and a peripheral stalk. During catalysis, ATP synthesis in the catalytic domain of F(1) is coupled via a rotary mechanism of the central stalk subunits to proton translocation. Functionally, component of the F(0) channel, it forms part of the peripheral stalk, linking F(1) to F(0). The polypeptide is ATP synthase subunit b (Desulfotalea psychrophila (strain LSv54 / DSM 12343)).